The chain runs to 566 residues: O-fucosyltransferase 36 (566 aa).

The segment covering Met1–His14 has biased composition (basic and acidic residues). The segment at Met1 to Ile37 is disordered. Residues Tyr66–Pro86 form a helical; Signal-anchor for type II membrane protein membrane-spanning segment. Residues Asn93, Asn129, Asn138, Asn179, and Asn190 are each glycosylated (N-linked (GlcNAc...) asparagine). Residues His415–Arg417 and Thr531–Phe532 each bind substrate.

Belongs to the glycosyltransferase GT106 family.

Its subcellular location is the membrane. The protein operates within glycan metabolism. The chain is O-fucosyltransferase 36 from Arabidopsis thaliana (Mouse-ear cress).